We begin with the raw amino-acid sequence, 319 residues long: Protease HtpX homolog (319 aa).

A run of 2 helical transmembrane segments spans residues 6-26 (TAML…VIGG) and 28-48 (GGMM…YWNS). Zn(2+) is bound at residue histidine 130. The active site involves glutamate 131. Histidine 134 provides a ligand contact to Zn(2+). The next 2 helical transmembrane spans lie at 145–165 (LTAT…FFGG) and 172–192 (PLGF…AMLV). Residue glutamate 201 coordinates Zn(2+). Positions 279-319 (REMSAGSTAPARPDNAVRRSRSVPKTGWGRGGSEPPKGPWS) are disordered.

It belongs to the peptidase M48B family. The cofactor is Zn(2+).

It is found in the cell inner membrane. This is Protease HtpX homolog from Sinorhizobium fredii (strain NBRC 101917 / NGR234).